A 356-amino-acid polypeptide reads, in one-letter code: tRNA N6-adenosine threonylcarbamoyltransferase (356 aa).

Fe cation contacts are provided by His-110 and His-114. Residues 133–137 (LVSGG), Asp-166, Gly-179, and Asn-276 each bind substrate. Asp-304 provides a ligand contact to Fe cation.

The protein belongs to the KAE1 / TsaD family. The cofactor is Fe(2+).

The protein resides in the cytoplasm. The enzyme catalyses L-threonylcarbamoyladenylate + adenosine(37) in tRNA = N(6)-L-threonylcarbamoyladenosine(37) in tRNA + AMP + H(+). Its function is as follows. Required for the formation of a threonylcarbamoyl group on adenosine at position 37 (t(6)A37) in tRNAs that read codons beginning with adenine. Is involved in the transfer of the threonylcarbamoyl moiety of threonylcarbamoyl-AMP (TC-AMP) to the N6 group of A37, together with TsaE and TsaB. TsaD likely plays a direct catalytic role in this reaction. This chain is tRNA N6-adenosine threonylcarbamoyltransferase, found in Teredinibacter turnerae (strain ATCC 39867 / T7901).